We begin with the raw amino-acid sequence, 470 residues long: MNPNQKLFALSGVAIALSIFNLLIGISNVVLNVSLHLKNNNDQDKNWTCTSITQNNTTLIENTYVNNTTVINKETEAAKQNYLMLNKSLCKVEGWVVVAKDNAIRFGESEQVIVTREPYVSCDPLGCRMYALHQGTTIRNKHSNGTIHDRTALRGLISTPLGSPPVVSNSDFLCVGWSSTSCHDGIGRMTICVQGNNDNATATVYYDRRLTTTIKTWARNILRTQESECVCHNGTCVVVMTDGSASSQAHTKVLYFHKGLIIKEEALKGSARHIEECSCYGHDSKVTCVCRDNWQGANRPVIEIDMNAMEHTSQYLCTGVLTDTSRPSDKSIGDCNNPITGSPGAPGVKGFGFLDSSNTWLGRTISPRSRSGFEMLKIPNAGTDPNSRITERQEIVDSNNWSGYSGSFIDYWDESSECYNPCFYVELIRGRPEEAKYVWWTSNSLVALCGSPVPVGSGSFPDGAQIQYFS.

The Intravirion portion of the chain corresponds to 1 to 6 (MNPNQK). The chain crosses the membrane as a helical span at residues 7–27 (LFALSGVAIALSIFNLLIGIS). Residues 11–33 (SGVAIALSIFNLLIGISNVVLNV) are involved in apical transport and lipid raft association. The Virion surface segment spans residues 28–470 (NVVLNVSLHL…PDGAQIQYFS (443 aa)). 7 N-linked (GlcNAc...) asparagine; by host glycosylation sites follow: asparagine 32, asparagine 46, asparagine 55, asparagine 56, asparagine 66, asparagine 67, and asparagine 86. The interval 36–86 (HLKNNNDQDKNWTCTSITQNNTTLIENTYVNNTTVINKETEAAKQNYLMLN) is hypervariable stalk region. The segment at 89–470 (LCKVEGWVVV…PDGAQIQYFS (382 aa)) is head of neuraminidase. Disulfide bonds link cysteine 90–cysteine 418, cysteine 122–cysteine 127, cysteine 182–cysteine 229, cysteine 231–cysteine 236, cysteine 277–cysteine 290, cysteine 279–cysteine 288, cysteine 317–cysteine 335, and cysteine 422–cysteine 449. Arginine 116 provides a ligand contact to substrate. Asparagine 144 carries an N-linked (GlcNAc...) asparagine; by host glycan. The Proton donor/acceptor role is filled by aspartate 149. A substrate-binding site is contributed by arginine 150. N-linked (GlcNAc...) asparagine; by host glycans are attached at residues asparagine 199 and asparagine 233. 275-276 (EE) serves as a coordination point for substrate. Arginine 291 contacts substrate. Ca(2+)-binding residues include aspartate 292, glycine 296, and aspartate 323. Arginine 370 is a binding site for substrate. Asparagine 400 is a glycosylation site (N-linked (GlcNAc...) asparagine; by host). Tyrosine 404 serves as the catalytic Nucleophile.

It belongs to the glycosyl hydrolase 34 family. In terms of assembly, homotetramer. Ca(2+) serves as cofactor. Post-translationally, N-glycosylated.

It is found in the virion membrane. Its subcellular location is the host apical cell membrane. The catalysed reaction is Hydrolysis of alpha-(2-&gt;3)-, alpha-(2-&gt;6)-, alpha-(2-&gt;8)- glycosidic linkages of terminal sialic acid residues in oligosaccharides, glycoproteins, glycolipids, colominic acid and synthetic substrates.. Its activity is regulated as follows. Inhibited by the neuraminidase inhibitors zanamivir (Relenza) and oseltamivir (Tamiflu). These drugs interfere with the release of progeny virus from infected cells and are effective against all influenza strains. Resistance to neuraminidase inhibitors is quite rare. In terms of biological role, catalyzes the removal of terminal sialic acid residues from viral and cellular glycoconjugates. Cleaves off the terminal sialic acids on the glycosylated HA during virus budding to facilitate virus release. Additionally helps virus spread through the circulation by further removing sialic acids from the cell surface. These cleavages prevent self-aggregation and ensure the efficient spread of the progeny virus from cell to cell. Otherwise, infection would be limited to one round of replication. Described as a receptor-destroying enzyme because it cleaves a terminal sialic acid from the cellular receptors. May facilitate viral invasion of the upper airways by cleaving the sialic acid moieties on the mucin of the airway epithelial cells. Likely to plays a role in the budding process through its association with lipid rafts during intracellular transport. May additionally display a raft-association independent effect on budding. Plays a role in the determination of host range restriction on replication and virulence. Sialidase activity in late endosome/lysosome traffic seems to enhance virus replication. The chain is Neuraminidase from Aves (Horse).